A 464-amino-acid chain; its full sequence is tRNA-2-methylthio-N(6)-dimethylallyladenosine synthase (464 aa).

One can recognise an MTTase N-terminal domain in the interval 19-135 (GSYWITTFGC…LENLLERVDL (117 aa)). 6 residues coordinate [4Fe-4S] cluster: Cys28, Cys64, Cys98, Cys170, Cys174, and Cys177. One can recognise a Radical SAM core domain in the interval 156–393 (RDSSICGWVN…NELVETTSRK (238 aa)). Residues 396–464 (QRYLNNIESV…SFSLSGQIYK (69 aa)) form the TRAM domain.

It belongs to the methylthiotransferase family. MiaB subfamily. Monomer. [4Fe-4S] cluster serves as cofactor.

It is found in the cytoplasm. It carries out the reaction N(6)-dimethylallyladenosine(37) in tRNA + (sulfur carrier)-SH + AH2 + 2 S-adenosyl-L-methionine = 2-methylsulfanyl-N(6)-dimethylallyladenosine(37) in tRNA + (sulfur carrier)-H + 5'-deoxyadenosine + L-methionine + A + S-adenosyl-L-homocysteine + 2 H(+). Functionally, catalyzes the methylthiolation of N6-(dimethylallyl)adenosine (i(6)A), leading to the formation of 2-methylthio-N6-(dimethylallyl)adenosine (ms(2)i(6)A) at position 37 in tRNAs that read codons beginning with uridine. This is tRNA-2-methylthio-N(6)-dimethylallyladenosine synthase from Prochlorococcus marinus subsp. pastoris (strain CCMP1986 / NIES-2087 / MED4).